We begin with the raw amino-acid sequence, 444 residues long: DNA primase DnaG (444 aa).

Positions 186–260 (DSIIVVEGRN…EVDFVARAPP (75 aa)) constitute a Toprim domain. Mg(2+) contacts are provided by Glu192, Asp234, and Asp236.

This sequence belongs to the archaeal DnaG primase family. As to quaternary structure, forms a ternary complex with MCM helicase and DNA. Component of the archaeal exosome complex. It depends on Mg(2+) as a cofactor.

It carries out the reaction ssDNA + n NTP = ssDNA/pppN(pN)n-1 hybrid + (n-1) diphosphate.. Functionally, RNA polymerase that catalyzes the synthesis of short RNA molecules used as primers for DNA polymerase during DNA replication. Also part of the exosome, which is a complex involved in RNA degradation. Acts as a poly(A)-binding protein that enhances the interaction between heteromeric, adenine-rich transcripts and the exosome. In Thermoplasma volcanium (strain ATCC 51530 / DSM 4299 / JCM 9571 / NBRC 15438 / GSS1), this protein is DNA primase DnaG.